The primary structure comprises 295 residues: 4-diphosphocytidyl-2-C-methyl-D-erythritol kinase (295 aa).

Residue Lys-18 is part of the active site. ATP is bound at residue 101–111 (PMGGGIGGGSS). Asp-143 is an active-site residue.

This sequence belongs to the GHMP kinase family. IspE subfamily.

It catalyses the reaction 4-CDP-2-C-methyl-D-erythritol + ATP = 4-CDP-2-C-methyl-D-erythritol 2-phosphate + ADP + H(+). The protein operates within isoprenoid biosynthesis; isopentenyl diphosphate biosynthesis via DXP pathway; isopentenyl diphosphate from 1-deoxy-D-xylulose 5-phosphate: step 3/6. In terms of biological role, catalyzes the phosphorylation of the position 2 hydroxy group of 4-diphosphocytidyl-2C-methyl-D-erythritol. The protein is 4-diphosphocytidyl-2-C-methyl-D-erythritol kinase of Vibrio cholerae serotype O1 (strain ATCC 39315 / El Tor Inaba N16961).